The chain runs to 319 residues: Protein quaking-B (319 aa).

The KH domain occupies 87 to 153 (YVPVKEYPDF…WEHLNEDLHV (67 aa)). The SH3-binding signature appears at 276–279 (PQTP).

This sequence belongs to the quaking family. Homodimer; does not require RNA to homodimerize.

The protein resides in the cytoplasm. Its subcellular location is the nucleus. Functionally, RNA reader protein, which recognizes and binds specific RNAs, thereby regulating RNA metabolic processes, such as pre-mRNA splicing, circular RNA (circRNA) formation, mRNA export, mRNA stability and/or translation. Involved in various cellular processes, such as mRNA storage into stress granules, apoptosis, interferon response, glial cell fate and development. Binds to the 5'-NACUAAY-N(1,20)-UAAY-3' RNA core sequence. Acts as a mRNA modification reader that specifically recognizes and binds mRNA transcripts modified by internal N(7)-methylguanine (m7G). Promotes the formation of circular RNAs (circRNAs): acts by binding to sites flanking circRNA-forming exons. CircRNAs are produced by back-splicing circularization of pre-mRNAs. Required to protect and promote stability of mRNAs which promotes oligodendrocyte differentiation. Acts as an important regulator of muscle development: required during early skeletal myofibril formation by regulating the accumulation of the muscle-specific tropomyosin-3 (tpm3) transcripts. The protein is Protein quaking-B (qki2) of Danio rerio (Zebrafish).